We begin with the raw amino-acid sequence, 89 residues long: Small ribosomal subunit protein uS14 (89 aa).

The protein belongs to the universal ribosomal protein uS14 family. Part of the 30S ribosomal subunit. Contacts proteins S3 and S10.

Functionally, binds 16S rRNA, required for the assembly of 30S particles and may also be responsible for determining the conformation of the 16S rRNA at the A site. This is Small ribosomal subunit protein uS14 from Latilactobacillus sakei subsp. sakei (strain 23K) (Lactobacillus sakei subsp. sakei).